Consider the following 459-residue polypeptide: Argininosuccinate lyase (459 aa).

It belongs to the lyase 1 family. Argininosuccinate lyase subfamily.

Its subcellular location is the cytoplasm. The catalysed reaction is 2-(N(omega)-L-arginino)succinate = fumarate + L-arginine. It participates in amino-acid biosynthesis; L-arginine biosynthesis; L-arginine from L-ornithine and carbamoyl phosphate: step 3/3. The sequence is that of Argininosuccinate lyase from Prochlorococcus marinus (strain AS9601).